A 253-amino-acid chain; its full sequence is MGEFNEKKTTCGTVCLKYLLFTYNCCFWLAGLAVMAVGIWTLALKSDYISLLASGTYLATAYILVVAGTVVMVTGVLGCCATFKERRNLLRLYFILLLIIFLLEIIAGILAYAYYQQLNTELKENLKDTMTKRYHQPGHEAVTSAVDQLQQEFHCCGSNNSQDWRDSEWIRSQEAGGRVVPDSCCKTVVALCGQRDHASNIYKVEGGCITKLETFIQEHLRVIGAVGIGIACVQVFGMIFTCCLYRSLKLEHY.

Residues 1-18 (MGEFNEKKTTCGTVCLKY) lie on the Cytoplasmic side of the membrane. S-palmitoyl cysteine attachment occurs at residues Cys11 and Cys15. Residues 19–39 (LLFTYNCCFWLAGLAVMAVGI) form a helical membrane-spanning segment. At 40-57 (WTLALKSDYISLLASGTY) the chain is on the extracellular side. The chain crosses the membrane as a helical span at residues 58 to 78 (LATAYILVVAGTVVMVTGVLG). Residues 79–91 (CCATFKERRNLLR) lie on the Cytoplasmic side of the membrane. The chain crosses the membrane as a helical span at residues 92-112 (LYFILLLIIFLLEIIAGILAY). At 113–221 (AYYQQLNTEL…LETFIQEHLR (109 aa)) the chain is on the extracellular side. The N-linked (GlcNAc...) asparagine glycan is linked to Asn159. Residues 222 to 242 (VIGAVGIGIACVQVFGMIFTC) traverse the membrane as a helical segment. 2 S-palmitoyl cysteine lipidation sites follow: Cys242 and Cys243. The Cytoplasmic portion of the chain corresponds to 243-253 (CLYRSLKLEHY).

This sequence belongs to the tetraspanin (TM4SF) family. As to quaternary structure, interacts with integrins ITGA3:ITGB1, ITGA5:ITGB1, ITGA3:ITGB1 and ITGA6:ITGB4 and with CD9 and CD181. Interacts (via the second extracellular domain) with integrin ITGAV:ITGB3. Interacts with ITGA3; this interaction modulates ITGA3 glycosylation pattern. Interacts with F11R. Interacts with RAC1 and CDC42; these interactions mediate physical association of RAC1 and CDC42 with integrin adhesion receptor complexes. Palmitoylated. Palmitoylation by ZDHHC2 regulates CD151 expression, association with other tetraspanin family proteins and function in cell adhesion. Post-translationally, ubiquitinated by RNF128 on lysine residues present in the tetraspanin amino terminus via 'Lys-48'-linked ubiquitin leading to proteasomal degradation. As to expression, expressed in a variety of tissues including vascular endothelium and epidermis. Expressed on erythroid cells, with a higher level of expression in erythroid precursors than on mature erythrocytes. Acts as a sensitive T-cell activation marker.

It is found in the cell membrane. Its function is as follows. Structural component of specialized membrane microdomains known as tetraspanin-enriched microdomains (TERMs), which act as platforms for receptor clustering and signaling. Plays a role in various cellular and molecular mechanism through its association with both integrin and non-integrin proteins. These interactions facilitate critical cellular functions, including cell-to-cell communication, wound healing, platelet aggregation, trafficking, cell motility, and angiogenesis. Via interaction with JAM-A/F11R and integrin ITGA3:ITGB1, promotes the recruitment of signaling molecules such as RAC1, CDC42 and RhoGTPases to facilitate the polarization of epithelial cells and the reorganization of the actin cytoskeleton, which are critical steps in cell migration process. Regulates the glycosylation pattern of ITGA3:ITGB1 thereby modulating its activity. Plays an essential role in the maintenance of central laminin-binding integrin ITGA6:ITGB4-containing adhesion complexes. Essential for the proper assembly of the glomerular and tubular basement membranes in kidney. Contributes to T-cell activation by modulating integrin signaling leading to activation of downstream targets PTK2 and MAPK1/MAPK3. Functionally, (Microbial infection) Plays a role in human papillomavirus 16/HPV-16 endocytosis upon binding to cell surface receptor. (Microbial infection) Plays a role in human cytomegalovirus entry into host cell by contributing to entry receptor binding, membrane fusion, or release of the capsid. The polypeptide is CD151 antigen (CD151) (Homo sapiens (Human)).